We begin with the raw amino-acid sequence, 139 residues long: MGSNSLSMIKVRLQNLFDNDEVALLKITCYTDKLIHLTNALAKAVIHTIKLNGIVFVHVITSSDICPNNNIVVKSNFTTMPVLQNGGYIWEMMELTHCSQPNGLLDDNCEIKFSKKLSDSTMTNYMNQLSELLGFDLNP.

The DLNP; interaction with MAP1B motif lies at 136–139 (DLNP).

It belongs to the pneumovirus non-structural protein 1 family. Monomer. Homomultimer. Heteromultimer with NS2. Interacts with the matrix protein M. Interacts with host ELOC and CUL2; this interaction allows NS1 to form an active E3 ligase with ELOC and CUL2. Interacts with host IRF3; this interaction leads to the disrupted association of IRF3 with CREBBP and thus reduced binding of IRF3 to the IFN-beta promoter. Interacts with host MAVS; this interaction prevents MAVS binding to RIGI and inhibits signaling pathway leading to interferon production. Interacts with host MAP1B/microtubule-associated protein 1B. Interacts with host TRIM25 (via SPRY domain); this interaction suppresses RIGI ubiquitination and results in decreased interaction between RIGI and MAVS.

Its subcellular location is the host cytoplasm. It is found in the host mitochondrion. It localises to the host nucleus. Plays a major role in antagonizing the type I IFN-mediated antiviral response by degrading or inhibiting multiple cellular factors required for either IFN induction or response pathways. Acts cooperatively with NS2 to repress activation and nuclear translocation of host IFN-regulatory factor IRF3. Also disrupts the association of IRF3 with CREBBP. Interacts with host mitochondrial-associated membrane (MAM) MAVS and prevents the interaction with RIGI. Interacts with TRIM25 to suppress TRIM25-mediated RIGI ubiquitination and thereby RIGI-MAVS interaction. Together with NS2, participates in the proteasomal degradation of host STAT2, IRF3, IRF7, TBK1 and RIGI through a NS-degradasome involving CUL2 and Elongin-C. The degradasome requires an intact mitochondrial MAVS. Decreases the levels of host TRAF3 and IKBKE/IKK-epsilon. As functions other than disruptions of the type I IFN-mediated antiviral signaling pathways, induces host SOCS1 and SOCS3 expression. Suppresses premature apoptosis by an NF-kappa-B-dependent, interferon-independent mechanism and thus facilitates virus growth. Additionally, NS1 may serve some inhibitory role in viral transcription and RNA replication. Suppresses proliferation and activation of host CD103+ CD8+ cytotoxic T-lymphocytes and Th17 helper T-lymphocytes. This Homo sapiens (Human) protein is Non-structural protein 1 (1C).